We begin with the raw amino-acid sequence, 459 residues long: Cysteine--tRNA ligase (459 aa).

Cys28 provides a ligand contact to Zn(2+). A 'HIGH' region motif is present at residues 30-40 (VTVYDLCHIGH). Residues Cys209, His234, and Glu238 each coordinate Zn(2+). The short motif at 266–270 (KMSKS) is the 'KMSKS' region element. Residue Lys269 coordinates ATP.

Belongs to the class-I aminoacyl-tRNA synthetase family. Monomer. Zn(2+) serves as cofactor.

The protein localises to the cytoplasm. The catalysed reaction is tRNA(Cys) + L-cysteine + ATP = L-cysteinyl-tRNA(Cys) + AMP + diphosphate. The chain is Cysteine--tRNA ligase (cysS) from Haemophilus influenzae (strain ATCC 51907 / DSM 11121 / KW20 / Rd).